We begin with the raw amino-acid sequence, 255 residues long: 6-phosphogluconolactonase 4 (255 aa).

This sequence belongs to the glucosamine/galactosamine-6-phosphate isomerase family. 6-phosphogluconolactonase subfamily.

The protein localises to the cytoplasm. It carries out the reaction 6-phospho-D-glucono-1,5-lactone + H2O = 6-phospho-D-gluconate + H(+). It participates in carbohydrate degradation; pentose phosphate pathway; D-ribulose 5-phosphate from D-glucose 6-phosphate (oxidative stage): step 2/3. Involved in the pentose phosphate pathway via hydrolysis of 6-phosphogluconolactone to 6-phosphogluconate. This chain is 6-phosphogluconolactonase 4, found in Saccharomyces cerevisiae (strain ATCC 204508 / S288c) (Baker's yeast).